Here is a 299-residue protein sequence, read N- to C-terminus: Tyrosine recombinase XerC (299 aa).

The Core-binding (CB) domain occupies 3-87; it reads PQCQSYLQQF…AIKQWGEFLL (85 aa). The Tyr recombinase domain occupies 108–287; sequence PLPKNIDVDS…DFQHLAKVYD (180 aa). Catalysis depends on residues Arg147, Lys171, His239, Arg242, and His265. Tyr274 (O-(3'-phospho-DNA)-tyrosine intermediate) is an active-site residue.

This sequence belongs to the 'phage' integrase family. XerC subfamily. Forms a cyclic heterotetrameric complex composed of two molecules of XerC and two molecules of XerD.

The protein resides in the cytoplasm. Site-specific tyrosine recombinase, which acts by catalyzing the cutting and rejoining of the recombining DNA molecules. The XerC-XerD complex is essential to convert dimers of the bacterial chromosome into monomers to permit their segregation at cell division. It also contributes to the segregational stability of plasmids. The polypeptide is Tyrosine recombinase XerC (Shewanella sp. (strain ANA-3)).